The following is a 369-amino-acid chain: Glycolate oxidase 1 (369 aa).

Positions 1–360 (MGEITNVMEY…TRAHIYTDAD (360 aa)) constitute an FMN hydroxy acid dehydrogenase domain. Residue Y25 participates in glyoxylate binding. FMN is bound by residues 78–80 (PSA), S107, 128–130 (QLY), and T156. Y130 lines the glyoxylate pocket. R165 lines the glyoxylate pocket. FMN-binding residues include K231 and S253. H255 and R258 together coordinate glyoxylate. The active-site Proton acceptor is H255. FMN-binding positions include 286 to 290 (DGGVR) and 309 to 310 (GR). The Microbody targeting signal motif lies at 367–369 (PRL).

It belongs to the FMN-dependent alpha-hydroxy acid dehydrogenase family. In terms of assembly, homotetramer. Interacts with rice dwarf virus (RDV) P8. This interaction promotes viral P8 relocation to virus factories peripheral to peroxisomes. It depends on FMN as a cofactor.

The protein localises to the peroxisome. It carries out the reaction glycolate + O2 = glyoxylate + H2O2. It participates in photosynthesis; photorespiration; glycine from 2-phosphoglycolate: step 2/3. In terms of biological role, catalyzes the oxidation of glycolate to glyoxylate, with a reduction of O2 to H2O2. Is a key enzyme in photorespiration in plants. Can exert a strong regulation over photosynthesis, possibly through a feed-back inhibition on Rubisco activase. Does not seem to play a role in oxalate accumulation. The chain is Glycolate oxidase 1 (GLO1) from Oryza sativa subsp. indica (Rice).